An 863-amino-acid polypeptide reads, in one-letter code: MSEKEGMSEELEDTISQFRKESRSQSVKEPGFIKETSNLINEASDYLEGKSSNQIYETHPRQITLESTSSSGSKSKRNEEQKKNLQFSETSTRTETSQSLSSLTGRIAEYQALVNFLSHETVGEVSPQVSEENQKHLGLETTCKDNFTVNLEAKGLQEFPKDILKIKYVKHLYLDKNQIKTFQGADSGDLLGLEILSLQENGLSSLPSEIQLLHNLRILNVSHNHISHIPKEISQLGNIRQLFFYNNYIENFPSDLECLGNLEILSLGKNKLRHIPDTLPSLKYLRVLNLEYNQLTIFPKALCFLPKLISLDLTGNLISSLPKEIRELKNLETLLLDHNKLTFLAVEIFQLLKIKELQLADNKLEVISHKIENFRELRILILDKNLLKNIPEKICCCAMLECLTLSDNKLTELPKNIHKLNNLRKLHVNRNNMVKITDSISHLNNICSLEFSGNIIAGIPIEIKNCQKIIKIELNYNKIMYFPLGLCALDSLYYLSVNGNYISEIPADISFSKQLLHLELSENKLLIFSEHFCSLINLKYLDLGKNQIKKIPASISNMISLHVLILCCNKFETFPRELCTLENLRVLDLSENQLQKISSDICNLKRIQKLNFSSNQFIHFPIELCQLQSLEQLNISQIKGRKLTRLPGELSNMTQLKELDISNNAIREIPRNIGELRNLVSLHAYNNQISYIPPSLLSLNDLQQLNLSGNNLTALPSAIYNLFSLKEINFDDNPLLRPPMEICKGKQLYTIARYLQRADERDEKILEKIFKIVANNITETNFEFLCQKLNLANSETDMPTKSTVSLSERAHQALVIWKTQSNKLSLTAAALRDQLIRALTMIGAYEIMDKITALNLFTRAIKF.

Disordered regions lie at residues 1 to 37 (MSEK…KETS) and 51 to 100 (SSNQ…SQSL). A compositionally biased stretch (low complexity) spans 88–100 (SETSTRTETSQSL). LRR repeat units lie at residues 143-166 (CKDN…ILKI), 167-189 (KYVK…DSGD), 190-213 (LLGL…IQLL), 214-236 (HNLR…ISQL), 238-259 (NIRQ…LECL), 260-282 (GNLE…LPSL), 284-305 (YLRV…LCFL), 306-328 (PKLI…IREL), 329-351 (KNLE…IFQL), 353-374 (KIKE…IENF), 375-397 (RELR…ICCC), 398-420 (AMLE…IHKL), 422-443 (NLRK…ISHL), 445-466 (NICS…IKNC), 468-489 (KIIK…LCAL), 490-513 (DSLY…SFSK), 515-535 (LLHL…FCSL), 536-558 (INLK…ISNM), 560-581 (SLHV…LCTL), 582-604 (ENLR…ICNL), 606-627 (RIQK…LCQL), 630-653 (LEQL…LSNM), 654-676 (TQLK…IGEL), 678-699 (NLVS…LLSL), 700-722 (NDLQ…IYNL), and 724-745 (SLKE…ICKG). A Death domain is found at 767–855 (EKIFKIVANN…EIMDKITALN (89 aa)). One copy of the LRR 27 repeat lies at 856–863 (LFTRAIKF).

The sequence is that of Leucine-rich repeat and death domain-containing protein 1 (LRRD1) from Macaca fascicularis (Crab-eating macaque).